A 473-amino-acid polypeptide reads, in one-letter code: MTVDTITSTSNGNQDVPKEFLPIEFETQLLHLGRFPDILGSCAVPVYSSAAFEFNSVAHGARLLNLTQFGNIYSRFTNPTVNVLQNRLAGLEGGVAACGVASGSAAVVVTVMALTGVGDNFVSSFHVHAGTFHQFDSLAKQMGIECRFVKSRDPADFAAAIDDKTKFVWLETISNPGNVILDLEAVSTVCHTKGIPLICDNTFGCAGYFCRPIDHGVDIVVHSATKWIGGHGTTVGGIIVDGGTFDWGQHPDRFPQFHDPRTRLWERFSRRAFAVRCQFEILRDTGSTLSAPAAQQLLVGLESLAVRCERHAQNAAKIADWLREYPLVAWVSYVGHPNHPDHQGALKYLKRGFGSVICFGLRGGFEAGALFCDALKMVITTTNLGDAKTLILHPASTTHEHFSSEHRAEAGVTDDMIRLSVGIEQIKDIKADFEQAFKQVLRGKKSLRKPCIGKILMQDEINEDLFGPSACRT.

An N6-(pyridoxal phosphate)lysine modification is found at Lys226.

It belongs to the trans-sulfuration enzymes family. Pyridoxal 5'-phosphate serves as cofactor.

The protein operates within alkaloid biosynthesis. Its function is as follows. Sulfhydrylase-like protein; part of the gene cluster that mediates the biosynthesis of loline alkaloids, potent insecticidal agents composed of a pyrrolizidine ring system and an uncommon ether bridge linking carbons 2 and 7. Lolines are structurally differentiated by the various modifications of the L-amino group and include norloline, loline, N-methylloline, N-acetylloline, N-acetylnorloline, and N-formylloline. The first committed step is the condensation of O-acetyl-L-homoserine (derived from L-aspartic acid) and L-proline, probably catalyzed by the gamma-type pyridoxal 5'-phosphate(PLP)-dependent enzyme lolC, to give the diamino diacid, NACPP. Ensuing cyclization, decarboxylation, and acetylation steps yield 1-exo-acetamidopyrrolizidine (AcAP). LolO is required for installation of the ether bridge upon the pathway intermediate, 1-exo-acetamidopyrrolizidine (AcAP). In sequential 2-oxoglutarate- and O(2)-consuming steps, lolO removes hydrogens from C2 and C7 of AcAP to form both carbon-oxygen bonds in N-acetylnorloline (NANL), the precursor to all other lolines. The enzymes lolD, lolE, lolF and lolT have also been proposed to be involved in the ether-bridge installation. Further processing of the exocyclic moiety of NANL by fungal N-acetamidase (LolN), methyltransferase (LolM), and cytochrome P450 (LolP) enzymes, with occasional involvement of a plant acetyltransferase, generates the other known lolines. LolN transforms NANL to norlonine which is monomethylated and dimethylated to respectively lonine and N-methyllonine (NML) by lolM. LolP catalyzes hydroxylation of the methyl group in N-methylloline (NML) and further oxygenation to N-formylloline (NFL). A plant acetyltransferase is responsible for the acetylation of loline to form N-acetylloline (NAL). LolA might interact with aspartate kinase to prevent feedback inhibition of its activity by these end products and thereby promote production of L-homoserine from L-aspartate. The sequence is that of Sulfhydrylase-like protein lolC2 from Epichloe uncinata (Endophyte fungus).